We begin with the raw amino-acid sequence, 595 residues long: Adenine deaminase 2 (595 aa).

Belongs to the metallo-dependent hydrolases superfamily. Adenine deaminase family. Mn(2+) is required as a cofactor.

It carries out the reaction adenine + H2O + H(+) = hypoxanthine + NH4(+). This chain is Adenine deaminase 2, found in Rhizobium johnstonii (strain DSM 114642 / LMG 32736 / 3841) (Rhizobium leguminosarum bv. viciae).